A 267-amino-acid chain; its full sequence is MSVVSLPQLLEAGVHFGHKASRWNPKMRPYIFAERNGIHIIDLVQTARYLNEAYEYVREGAEKGWRFLFVGTKRQAAGIIAHEATRCGSYYVNQRWLGGMLTNWATIKTRIDRLKEIEEMQSSGLLDRLPKQEAARLKRELAKLEKYLGGIKTMRKLPDAVIIVDQRREANAVQECIKLKIPIISLLDTNCDPDLSDVFIPSNDDAIRAIKLIVGKLADAIYEGRHGQLDTVEEDEYDYEGAMDMDLEDDILEDVEDEEEGDPEQGE.

The tract at residues 247–267 (LEDDILEDVEDEEEGDPEQGE) is disordered.

Belongs to the universal ribosomal protein uS2 family.

The sequence is that of Small ribosomal subunit protein uS2 from Synechococcus sp. (strain JA-3-3Ab) (Cyanobacteria bacterium Yellowstone A-Prime).